Reading from the N-terminus, the 1444-residue chain is RNA-directed RNA polymerase P1 (1444 aa).

The segment at 156–182 (SEEIQMDESQSDKRRRKKRMEKSRPVW) is disordered. The 208-residue stretch at 690-897 (LGVGFATLYQ…KTVISHISGE (208 aa)) folds into the RdRp catalytic domain.

Belongs to the reoviridae RNA-directed RNA polymerase family.

The protein resides in the virion. It is found in the host cytoplasm. It carries out the reaction RNA(n) + a ribonucleoside 5'-triphosphate = RNA(n+1) + diphosphate. Its function is as follows. RNA-directed RNA polymerase that is involved in both transcription and genome replication. Together with the capping enzyme P5 and protein P7, forms an enzyme complex positioned near the channels situated at each of the five-fold vertices of the core. This chain is RNA-directed RNA polymerase P1 (S1), found in Rice dwarf virus (isolate Fujian) (RDV).